Consider the following 302-residue polypeptide: Ribosomal RNA small subunit methyltransferase H (302 aa).

S-adenosyl-L-methionine-binding positions include 36 to 38, aspartate 56, phenylalanine 84, aspartate 99, and glutamine 106; that span reads GGH.

The protein belongs to the methyltransferase superfamily. RsmH family.

Its subcellular location is the cytoplasm. The enzyme catalyses cytidine(1402) in 16S rRNA + S-adenosyl-L-methionine = N(4)-methylcytidine(1402) in 16S rRNA + S-adenosyl-L-homocysteine + H(+). Specifically methylates the N4 position of cytidine in position 1402 (C1402) of 16S rRNA. This Flavobacterium johnsoniae (strain ATCC 17061 / DSM 2064 / JCM 8514 / BCRC 14874 / CCUG 350202 / NBRC 14942 / NCIMB 11054 / UW101) (Cytophaga johnsonae) protein is Ribosomal RNA small subunit methyltransferase H.